A 263-amino-acid chain; its full sequence is Indole-3-glycerol phosphate synthase (263 aa).

This sequence belongs to the TrpC family.

It catalyses the reaction 1-(2-carboxyphenylamino)-1-deoxy-D-ribulose 5-phosphate + H(+) = (1S,2R)-1-C-(indol-3-yl)glycerol 3-phosphate + CO2 + H2O. It functions in the pathway amino-acid biosynthesis; L-tryptophan biosynthesis; L-tryptophan from chorismate: step 4/5. In Polaromonas naphthalenivorans (strain CJ2), this protein is Indole-3-glycerol phosphate synthase.